The chain runs to 296 residues: MSNRLISGSTVALVTPFKEDGSVDYEALRRLVRFHREAGTDIILPCGTTGESPTLTNEEEAEIIRTVRDEAGDSMMVAAGAGTNDTRHAVELSRNAEKAGAQAILSVAPYYNKPSQEGYYQHFRHVAESVSVPIIIYNVPGRTASNVSAETILRLAHDFDNVLAVKEASANFEQIMTLIDERPERFSVMTGEDGLMLPFMALGGDGVISVAANQVPKVVKGLIDAMKAGNLEEARAINRKYRKLFRLNFIDSNPVPVKYALSLMGMVEEAYRLPLVPMSDADKATMKAELEQLGLI.

Position 49 (T49) interacts with pyruvate. Residue Y137 is the Proton donor/acceptor of the active site. K166 functions as the Schiff-base intermediate with substrate in the catalytic mechanism. I208 serves as a coordination point for pyruvate.

The protein belongs to the DapA family. As to quaternary structure, homotetramer; dimer of dimers.

Its subcellular location is the cytoplasm. It catalyses the reaction L-aspartate 4-semialdehyde + pyruvate = (2S,4S)-4-hydroxy-2,3,4,5-tetrahydrodipicolinate + H2O + H(+). The protein operates within amino-acid biosynthesis; L-lysine biosynthesis via DAP pathway; (S)-tetrahydrodipicolinate from L-aspartate: step 3/4. Catalyzes the condensation of (S)-aspartate-beta-semialdehyde [(S)-ASA] and pyruvate to 4-hydroxy-tetrahydrodipicolinate (HTPA). The chain is 4-hydroxy-tetrahydrodipicolinate synthase from Chlorobaculum parvum (strain DSM 263 / NCIMB 8327) (Chlorobium vibrioforme subsp. thiosulfatophilum).